Consider the following 287-residue polypeptide: MNMSKAEAFWQLTRMNRPIGSLLLLWPTLWALFLAADGLPDWHVLIVFVLGVVFMRSAGCVINDFADRKVDGHVKRTANRPLPSGLISSKEALSFFAVLVVCSFLLVLTMNTLTIMLSSIGIVLAIAYPFMKRVTYLPQFVLGLAFSWAIPMAYAAESNQVPSEAWLLFVINALWTIAYDTQYAMVDRDDDVKIGIKSTAILFGRYDKTIIGLLQLSVLALLIVLGSQLALSGIYYWGILAAAGFFVYQQWLIKGREREACFKAFLNNNYVGGLIFIAISASVLYQS.

Transmembrane regions (helical) follow at residues Ile-19–Leu-39, Trp-42–Ile-62, Phe-95–Ile-115, Tyr-136–Ala-156, Trp-166–Val-186, Ile-210–Ala-230, Gly-233–Ile-253, and Ala-264–Leu-284.

It belongs to the UbiA prenyltransferase family. Mg(2+) is required as a cofactor.

It is found in the cell inner membrane. The enzyme catalyses all-trans-octaprenyl diphosphate + 4-hydroxybenzoate = 4-hydroxy-3-(all-trans-octaprenyl)benzoate + diphosphate. It functions in the pathway cofactor biosynthesis; ubiquinone biosynthesis. Catalyzes the prenylation of para-hydroxybenzoate (PHB) with an all-trans polyprenyl group. Mediates the second step in the final reaction sequence of ubiquinone-8 (UQ-8) biosynthesis, which is the condensation of the polyisoprenoid side chain with PHB, generating the first membrane-bound Q intermediate 3-octaprenyl-4-hydroxybenzoate. This is 4-hydroxybenzoate octaprenyltransferase from Aliivibrio fischeri (strain MJ11) (Vibrio fischeri).